The following is a 138-amino-acid chain: Histone H2B.3 (138 aa).

2 stretches are compositionally biased toward basic and acidic residues: residues 1 to 18 (MAPK…EKTT) and 26 to 38 (EKRP…GGDK). The tract at residues 1–46 (MAPKAEKKPVAEKAEKTTAAKKTKAEKRPPASKEGGDKKGKKKSKK) is disordered. Lys-7 and Lys-27 each carry N6-acetyllysine. Lys-134 participates in a covalent cross-link: Glycyl lysine isopeptide (Lys-Gly) (interchain with G-Cter in ubiquitin).

This sequence belongs to the histone H2B family. As to quaternary structure, the nucleosome is a histone octamer containing two molecules each of H2A, H2B, H3 and H4 assembled in one H3-H4 heterotetramer and two H2A-H2B heterodimers. The octamer wraps approximately 147 bp of DNA. Can be acetylated to form H2BK6ac and H2BK33ac. Post-translationally, monoubiquitinated to form H2BK143ub1; may give a specific tag for epigenetic transcriptional activation.

The protein resides in the nucleus. It is found in the chromosome. Functionally, core component of nucleosome. Nucleosomes wrap and compact DNA into chromatin, limiting DNA accessibility to the cellular machineries which require DNA as a template. Histones thereby play a central role in transcription regulation, DNA repair, DNA replication and chromosomal stability. DNA accessibility is regulated via a complex set of post-translational modifications of histones, also called histone code, and nucleosome remodeling. The chain is Histone H2B.3 from Triticum aestivum (Wheat).